The sequence spans 946 residues: DNA ligase 4 (946 aa).

ATP contacts are provided by Glu-295, Lys-297, Arg-302, Glu-355, Phe-397, Glu-457, Lys-462, Lys-479, and Lys-481. Lys-297 (N6-AMP-lysine intermediate) is an active-site residue. Glu-355 is a Mg(2+) binding site. Residue Glu-457 coordinates Mg(2+). 2 BRCT domains span residues 688–787 (HRSD…PSHC) and 845–945 (VPHF…NYRL).

Belongs to the ATP-dependent DNA ligase family. Mg(2+) is required as a cofactor.

The protein localises to the nucleus. The enzyme catalyses ATP + (deoxyribonucleotide)n-3'-hydroxyl + 5'-phospho-(deoxyribonucleotide)m = (deoxyribonucleotide)n+m + AMP + diphosphate.. In terms of biological role, DNA ligase involved in DNA non-homologous end joining (NHEJ); required for double-strand break (DSB) repair. This chain is DNA ligase 4 (LIG4), found in Candida glabrata (strain ATCC 2001 / BCRC 20586 / JCM 3761 / NBRC 0622 / NRRL Y-65 / CBS 138) (Yeast).